We begin with the raw amino-acid sequence, 47 residues long: Exoenzymes regulatory protein AepH (47 aa).

Composition is skewed to basic and acidic residues over residues 1–17 (MGQE…QDGH) and 33–47 (TKKE…DANV). A disordered region spans residues 1–47 (MGQEPKGIESRKIQDGHVRKKVGRQQGLWVRTTKKEKFSRMSRDANV).

In terms of biological role, involved in the control of extracellular enzymes production. Stimulates PEL, PEH, CEL, and PRT production. The protein is Exoenzymes regulatory protein AepH (aepH) of Pectobacterium carotovorum subsp. carotovorum (Erwinia carotovora subsp. carotovora).